A 1047-amino-acid polypeptide reads, in one-letter code: Probable alpha-mannosidase At5g66150 (1047 aa).

The N-terminal stretch at 1–27 is a signal peptide; it reads MEKPGMSLLKGSLCVIVFLLLLSLVES. Positions 56, 58, and 178 each coordinate Zn(2+). N-linked (GlcNAc...) asparagine glycans are attached at residues asparagine 280, asparagine 287, and asparagine 345. Residue histidine 419 participates in Zn(2+) binding. 2 disulfides stabilise this stretch: cysteine 455-cysteine 465 and cysteine 476-cysteine 484. N-linked (GlcNAc...) asparagine glycosylation is found at asparagine 480, asparagine 508, asparagine 541, asparagine 605, asparagine 606, asparagine 668, asparagine 780, and asparagine 857. Cysteine 855 and cysteine 860 are disulfide-bonded.

This sequence belongs to the glycosyl hydrolase 38 family. Homodimer. Requires Zn(2+) as cofactor.

The protein resides in the vacuole. It catalyses the reaction Hydrolysis of terminal, non-reducing alpha-D-mannose residues in alpha-D-mannosides.. Functionally, liberates mannose from p-nitrophenyl-alpha-D-mannoside in vitro. In Arabidopsis thaliana (Mouse-ear cress), this protein is Probable alpha-mannosidase At5g66150.